We begin with the raw amino-acid sequence, 122 residues long: Holo-[acyl-carrier-protein] synthase (122 aa).

Residues D8 and E55 each coordinate Mg(2+).

It belongs to the P-Pant transferase superfamily. AcpS family. Requires Mg(2+) as cofactor.

The protein localises to the cytoplasm. It catalyses the reaction apo-[ACP] + CoA = holo-[ACP] + adenosine 3',5'-bisphosphate + H(+). Functionally, transfers the 4'-phosphopantetheine moiety from coenzyme A to a Ser of acyl-carrier-protein. This chain is Holo-[acyl-carrier-protein] synthase, found in Fusobacterium nucleatum subsp. nucleatum (strain ATCC 25586 / DSM 15643 / BCRC 10681 / CIP 101130 / JCM 8532 / KCTC 2640 / LMG 13131 / VPI 4355).